Consider the following 834-residue polypeptide: Glycerol-3-phosphate acyltransferase (834 aa).

Positions 309–314 (CHRSHI) match the HXXXXD motif motif.

The protein belongs to the GPAT/DAPAT family.

The protein resides in the cell inner membrane. The enzyme catalyses sn-glycerol 3-phosphate + an acyl-CoA = a 1-acyl-sn-glycero-3-phosphate + CoA. It participates in phospholipid metabolism; CDP-diacylglycerol biosynthesis; CDP-diacylglycerol from sn-glycerol 3-phosphate: step 1/3. The protein is Glycerol-3-phosphate acyltransferase of Pseudomonas aeruginosa (strain UCBPP-PA14).